Here is a 226-residue protein sequence, read N- to C-terminus: Lipoprotein-releasing system ATP-binding protein LolD (226 aa).

Residues 6 to 226 (LKLDNIRRAF…KMSEGLLVEV (221 aa)) enclose the ABC transporter domain. 42-49 (GPSGAGKS) lines the ATP pocket.

This sequence belongs to the ABC transporter superfamily. Lipoprotein translocase (TC 3.A.1.125) family. In terms of assembly, the complex is composed of two ATP-binding proteins (LolD) and two transmembrane proteins (LolC and LolE).

It is found in the cell inner membrane. Functionally, part of the ABC transporter complex LolCDE involved in the translocation of mature outer membrane-directed lipoproteins, from the inner membrane to the periplasmic chaperone, LolA. Responsible for the formation of the LolA-lipoprotein complex in an ATP-dependent manner. The polypeptide is Lipoprotein-releasing system ATP-binding protein LolD (Paramagnetospirillum magneticum (strain ATCC 700264 / AMB-1) (Magnetospirillum magneticum)).